Here is a 506-residue protein sequence, read N- to C-terminus: Arylsulfatase A (506 aa).

An N-terminal signal peptide occupies residues Met1–Ala17. Ca(2+)-binding residues include Asp28, Asp29, and Cys68. Cys68 serves as the catalytic Nucleophile. Cys68 bears the 3-oxoalanine (Cys) mark. Position 122 (Lys122) interacts with substrate. The active site involves His124. Residue Ser149 coordinates substrate. Disulfide bonds link Cys155–Cys171 and Cys160–Cys167. N-linked (GlcNAc...) asparagine glycosylation occurs at Asn157. Asn183 carries N-linked (GlcNAc...) asparagine glycosylation. His228 contributes to the substrate binding site. Asp280 and Asn281 together coordinate Ca(2+). Cystine bridges form between Cys299–Cys413, Cys487–Cys499, Cys488–Cys501, and Cys492–Cys498. Lys301 contacts substrate. N-linked (GlcNAc...) asparagine glycosylation is present at Asn349.

The protein belongs to the sulfatase family. Homodimer at neutral pH and homooctamer at acidic pH. Exists both as a single chain of 58 kDa (component A) or as a chain of 50 kDa (component B) linked by disulfide bond(s) to a 7 kDa chain (component C). Interacts with SUMF1. Ca(2+) is required as a cofactor. The conversion to 3-oxoalanine (also known as C-formylglycine, FGly), of a serine or cysteine residue in prokaryotes and of a cysteine residue in eukaryotes, is critical for catalytic activity. This post-translational modification is severely defective in multiple sulfatase deficiency (MSD).

It is found in the endoplasmic reticulum. Its subcellular location is the lysosome. It carries out the reaction an N-acyl-1-beta-D-(3-O-sulfo)-galactosyl-sphing-4-enine + H2O = a beta-D-galactosyl-(1&lt;-&gt;1')-N-acylsphing-4-enine + sulfate + H(+). Hydrolyzes cerebroside sulfate. The polypeptide is Arylsulfatase A (Arsa) (Mus musculus (Mouse)).